The following is a 184-amino-acid chain: Photosystem I assembly protein Ycf4 (184 aa).

The next 2 helical transmembrane spans lie at 19–39 (ISNF…VLVG) and 57–77 (ILFF…LFIS).

This sequence belongs to the Ycf4 family.

Its subcellular location is the plastid. The protein resides in the chloroplast thylakoid membrane. In terms of biological role, seems to be required for the assembly of the photosystem I complex. In Eucalyptus globulus subsp. globulus (Tasmanian blue gum), this protein is Photosystem I assembly protein Ycf4.